The primary structure comprises 44 residues: EVLLEGPSGVLFKDGQKKYLPPGVKIVLLTESGAVLSNGDNVQF.

2 consecutive repeat copies span residues 3–20 (LLEGPSGVLFKDGQKKYL) and 27–44 (VLLTESGAVLSNGDNVQF).

In terms of tissue distribution, calcified shell.

The polypeptide is Cuticle protein CP466 (Cancer pagurus (Rock crab)).